A 187-amino-acid chain; its full sequence is Protein GrpE (187 aa).

The segment at 1–23 (MNNEKELKKEETSVENKEKKVAT) is disordered.

It belongs to the GrpE family. In terms of assembly, homodimer.

It is found in the cytoplasm. Participates actively in the response to hyperosmotic and heat shock by preventing the aggregation of stress-denatured proteins, in association with DnaK and GrpE. It is the nucleotide exchange factor for DnaK and may function as a thermosensor. Unfolded proteins bind initially to DnaJ; upon interaction with the DnaJ-bound protein, DnaK hydrolyzes its bound ATP, resulting in the formation of a stable complex. GrpE releases ADP from DnaK; ATP binding to DnaK triggers the release of the substrate protein, thus completing the reaction cycle. Several rounds of ATP-dependent interactions between DnaJ, DnaK and GrpE are required for fully efficient folding. The protein is Protein GrpE of Mesoplasma florum (strain ATCC 33453 / NBRC 100688 / NCTC 11704 / L1) (Acholeplasma florum).